Consider the following 323-residue polypeptide: Serine acetyltransferase 2 (323 aa).

The segment at 302 to 323 (AQSNGPSLSAGDTEKGHTNSTS) is disordered. The segment covering 313–323 (DTEKGHTNSTS) has biased composition (basic and acidic residues).

This sequence belongs to the transferase hexapeptide repeat family. In terms of assembly, homomultimer. As to expression, ubiquitously expressed at low levels. Localized in vascular tissues, particularly in phloem.

It localises to the cytoplasm. The enzyme catalyses L-serine + acetyl-CoA = O-acetyl-L-serine + CoA. It functions in the pathway amino-acid biosynthesis; L-cysteine biosynthesis; L-cysteine from L-serine: step 1/2. The protein is Serine acetyltransferase 2 of Arabidopsis thaliana (Mouse-ear cress).